The primary structure comprises 51 residues: uncharacterized protein (51 aa).

Positions 1–51 (MARTNVKLCPPKRSKRPSNSRSKSTSHSNRRSLNSLRRTRTSRRSNNGKFT) are disordered. Residues 19-36 (NSRSKSTSHSNRRSLNSL) are compositionally biased toward low complexity.

This is an uncharacterized protein from Bdellovibrio bacteriovorus (Bacteriophage phiMH2K).